A 1716-amino-acid polypeptide reads, in one-letter code: DNA-directed RNA polymerase I subunit RPA1 (1716 aa).

Zn(2+) contacts are provided by Cys64, Cys67, Cys74, His77, Cys104, and Cys107. A clamp region spans residues 110 to 201 (LTCPRAAIHL…VAHFWKTHMA (92 aa)). Residues Cys205 and Cys208 each contribute to the Zn(2+) site. A clamp region spans residues 327-433 (FTNGQTVNLQ…IRQILEKKEG (107 aa)). The rudder stretch occupies residues 410 to 423 (DSDMDKLMLEKYPG). DNA is bound by residues Lys431, Arg436, and Arg443. An involved in RRN3 binding to Pol I complex region spans residues 475 to 549 (YPQPVTPWNV…QGAKVVCRHV (75 aa)). Arg559 is an RNA binding site. The Mg(2+) site is built by Asp595, Asp597, and Asp599. Asp599 serves as a coordination point for RNA. A funnel region spans residues 812-890 (KPNADVMRQR…NEINKACMPF (79 aa)). A bridging helix region spans residues 967–1008 (RPPEFFFHCMAGREGLVDTAVKTSRSGYLQRCIIKHLEGLVI). The tract at residues 1067 to 1162 (ADPQKVLRHF…SLSVWRPDIH (96 aa)) is mediates the interaction with TOP2A. Residues 1214–1255 (PGEAVGLLAAQSIGEPSTQMTLNTFHFAGRGEMNVTLGIPRL) form a trigger loop region. DNA is bound at residue Arg1256. The segment at 1368-1493 (ASAFRSVNTR…RHSRPQGAEA (126 aa)) is disordered. Basic and acidic residues predominate over residues 1380–1397 (TQKDLDDTEDSGRNRREE). 2 stretches are compositionally biased toward acidic residues: residues 1398-1419 (ERDEEEEGNIVDAEAEEGDADA) and 1429-1451 (EEEVDYESEEEGEEEEEEDVQEE). The span at 1452 to 1464 (ENIKGEGAHQTHE) shows a compositional bias: basic and acidic residues. Acidic residues predominate over residues 1465-1477 (PDEEEGSGLEEES).

It belongs to the RNA polymerase beta' chain family. Component of the RNA polymerase I (Pol I) complex consisting of 13 subunits: a ten-subunit catalytic core composed of POLR1A/RPA1, POLR1B/RPA2, POLR1C/RPAC1, POLR1D/RPAC2, POLR1H/RPA12, POLR2E/RPABC1, POLR2F/RPABC2, POLR2H/RPABC3, POLR2K/RPABC4 and POLR2L/RPABC5; a mobile stalk subunit POLR1F/RPA43 protruding from the core and additional subunits homologous to general transcription factors POLR1E/RPA49 and POLR1G/RPA34. Part of Pol I pre-initiation complex (PIC), in which Pol I core assembles with RRN3 and promoter-bound UTBF and SL1/TIF-IB complex. Interacts (via dock II domain) with TOP2A; this interaction may assist Pol I transcription initiation by releasing supercoils occurring during DNA unwinding. Interacts with CAVIN1; this interaction induces the dissociation of Pol I complex paused at rDNA terminator sequences. Interacts with MYO1C. Interacts with ERBB2. Interacts with DDX11. Interacts with RECQL5. Mg(2+) is required as a cofactor. Post-translationally, phosphorylated.

The protein resides in the nucleus. It localises to the nucleolus. It is found in the chromosome. The enzyme catalyses RNA(n) + a ribonucleoside 5'-triphosphate = RNA(n+1) + diphosphate. Functionally, catalytic core component of RNA polymerase I (Pol I), a DNA-dependent RNA polymerase which synthesizes ribosomal RNA precursors using the four ribonucleoside triphosphates as substrates. Transcribes 47S pre-rRNAs from multicopy rRNA gene clusters, giving rise to 5.8S, 18S and 28S ribosomal RNAs. Pol I-mediated transcription cycle proceeds through transcription initiation, transcription elongation and transcription termination stages. During transcription initiation, Pol I pre-initiation complex (PIC) is recruited by the selectivity factor 1 (SL1/TIF-IB) complex bound to the core promoter that precedes an rDNA repeat unit. The PIC assembly bends the promoter favoring the formation of the transcription bubble and promoter escape. Once the polymerase has escaped from the promoter it enters the elongation phase during which RNA is actively polymerized, based on complementarity with the template DNA strand. Highly processive, assembles in structures referred to as 'Miller trees' where many elongating Pol I complexes queue and transcribe the same rDNA coding regions. At terminator sequences downstream of the rDNA gene, PTRF interacts with Pol I and halts Pol I transcription leading to the release of the RNA transcript and polymerase from the DNA. Forms Pol I active center together with the second largest subunit POLR1B/RPA2. Appends one nucleotide at a time to the 3' end of the nascent RNA, with POLR1A/RPA1 contributing a Mg(2+)-coordinating DxDGD motif, and POLR1B/RPA2 participating in the coordination of a second Mg(2+) ion and providing lysine residues believed to facilitate Watson-Crick base pairing between the incoming nucleotide and the template base. Typically, Mg(2+) ions direct a 5' nucleoside triphosphate to form a phosphodiester bond with the 3' hydroxyl of the preceding nucleotide of the nascent RNA, with the elimination of pyrophosphate. Has proofreading activity: Pauses and backtracks to allow the cleavage of a missincorporated nucleotide via POLR1H/RPA12. High Pol I processivity is associated with decreased transcription fidelity. In Rattus norvegicus (Rat), this protein is DNA-directed RNA polymerase I subunit RPA1.